Consider the following 652-residue polypeptide: DNA ligase (652 aa).

NAD(+)-binding positions include 30-34 (DEVYD), 79-80 (SL), and E108. K110 functions as the N6-AMP-lysine intermediate in the catalytic mechanism. R131, E165, K280, and K304 together coordinate NAD(+). Residues C398, C401, C414, and C419 each contribute to the Zn(2+) site. Residues 574 to 652 (AKENPFKGKS…DEMRSKIEQA (79 aa)) enclose the BRCT domain.

The protein belongs to the NAD-dependent DNA ligase family. LigA subfamily. Mg(2+) serves as cofactor. Requires Mn(2+) as cofactor.

The catalysed reaction is NAD(+) + (deoxyribonucleotide)n-3'-hydroxyl + 5'-phospho-(deoxyribonucleotide)m = (deoxyribonucleotide)n+m + AMP + beta-nicotinamide D-nucleotide.. In terms of biological role, DNA ligase that catalyzes the formation of phosphodiester linkages between 5'-phosphoryl and 3'-hydroxyl groups in double-stranded DNA using NAD as a coenzyme and as the energy source for the reaction. It is essential for DNA replication and repair of damaged DNA. This chain is DNA ligase, found in Sulfurimonas denitrificans (strain ATCC 33889 / DSM 1251) (Thiomicrospira denitrificans (strain ATCC 33889 / DSM 1251)).